We begin with the raw amino-acid sequence, 102 residues long: Noncompact myelin-associated protein (102 aa).

The Extracellular portion of the chain corresponds to 1–30 (MTTATPLGDTTFFSLNMTTRGEDFLYKSSG). A helical transmembrane segment spans residues 31 to 51 (AIVAAVVVVVIIIFTVVLILL). Topologically, residues 52-102 (KMYNRKMRTRRELEPKGPKPTAPSAVGPNSNGSQHPATVTFSPVDVQVETR) are cytoplasmic. Residues 60–102 (TRRELEPKGPKPTAPSAVGPNSNGSQHPATVTFSPVDVQVETR) are disordered. Polar residues predominate over residues 78-92 (GPNSNGSQHPATVTF).

In terms of processing, glycosylated.

Its subcellular location is the cell membrane. In terms of biological role, plays a role in myelin formation. This chain is Noncompact myelin-associated protein (NCMAP), found in Homo sapiens (Human).